Here is a 133-residue protein sequence, read N- to C-terminus: Fatty acid-binding protein, heart (133 aa).

An N-acetylvaline modification is found at Val2. A Phosphothreonine modification is found at Thr8. Tyr20 is subject to Phosphotyrosine; by Tyr-kinases. A Phosphoserine modification is found at Ser23. A Phosphothreonine modification is found at Thr30. Phosphoserine is present on Ser83. 127 to 129 (RTY) serves as a coordination point for (9Z)-octadecenoate. 127–129 (RTY) is a binding site for hexadecanoate. 127–129 (RTY) contacts octadecanoate.

This sequence belongs to the calycin superfamily. Fatty-acid binding protein (FABP) family.

It localises to the cytoplasm. Its function is as follows. FABPs are thought to play a role in the intracellular transport of long-chain fatty acids and their acyl-CoA esters. The chain is Fatty acid-binding protein, heart (FABP3) from Sus scrofa (Pig).